The chain runs to 375 residues: Alpha-1,2-galactosyltransferase (375 aa).

At 1–2 (MR) the chain is on the cytoplasmic side. The helical; Signal-anchor for type II membrane protein transmembrane segment at 3–23 (FAPYLISAVVITTIILGGAWW) threads the bilayer. Topologically, residues 24 to 375 (TSAMDTKLQT…HIQNLLKPSS (352 aa)) are lumenal.

Belongs to the glycosyltransferase 34 family. Post-translationally, O-glycosylated.

The protein resides in the golgi apparatus membrane. In terms of biological role, involved in the O- and N-linked oligosaccharide modification of proteins transported through the Golgi stack. This occurs in cis Golgi where the enzyme transfers galactose from UDP-galactose to a variety of mannose based acceptors. The polypeptide is Alpha-1,2-galactosyltransferase (gma12) (Schizosaccharomyces pombe (strain 972 / ATCC 24843) (Fission yeast)).